The chain runs to 114 residues: Cell division protein FtsB (114 aa).

At 1 to 3 (MGK) the chain is on the cytoplasmic side. The chain crosses the membrane as a helical span at residues 4–21 (LTLLLVVLLGWLQYSLWV). Topologically, residues 22–114 (GKNGVHDYMR…ASYPSVTASH (93 aa)) are periplasmic. Residues 31–62 (RVKQDVATQQANNAKLKSRNDQLFAEIDDLNG) adopt a coiled-coil conformation.

The protein belongs to the FtsB family. As to quaternary structure, part of a complex composed of FtsB, FtsL and FtsQ.

It is found in the cell inner membrane. Functionally, essential cell division protein. May link together the upstream cell division proteins, which are predominantly cytoplasmic, with the downstream cell division proteins, which are predominantly periplasmic. This Edwardsiella ictaluri (strain 93-146) protein is Cell division protein FtsB.